The sequence spans 407 residues: uncharacterized protein (407 aa).

This is an uncharacterized protein from Mycobacterium bovis (strain ATCC BAA-935 / AF2122/97).